Here is a 317-residue protein sequence, read N- to C-terminus: uncharacterized protein (317 aa).

This is an uncharacterized protein from Lactuca sativa (Garden lettuce).